Consider the following 282-residue polypeptide: Malonyl-[acyl-carrier protein] O-methyltransferase 1 (282 aa).

This sequence belongs to the methyltransferase superfamily.

It catalyses the reaction malonyl-[ACP] + S-adenosyl-L-methionine = malonyl-[ACP] methyl ester + S-adenosyl-L-homocysteine. The protein operates within cofactor biosynthesis; biotin biosynthesis. Converts the free carboxyl group of a malonyl-thioester to its methyl ester by transfer of a methyl group from S-adenosyl-L-methionine (SAM). It allows to synthesize pimeloyl-ACP via the fatty acid synthetic pathway. The sequence is that of Malonyl-[acyl-carrier protein] O-methyltransferase 1 from Coxiella burnetii (strain RSA 493 / Nine Mile phase I).